The following is a 208-amino-acid chain: FMN-dependent NADH:quinone oxidoreductase (208 aa).

FMN contacts are provided by residues 17–19 (SNS), 99–102 (MWNL), and 143–146 (SRGG).

Belongs to the azoreductase type 1 family. As to quaternary structure, homodimer. Requires FMN as cofactor.

It catalyses the reaction 2 a quinone + NADH + H(+) = 2 a 1,4-benzosemiquinone + NAD(+). The enzyme catalyses N,N-dimethyl-1,4-phenylenediamine + anthranilate + 2 NAD(+) = 2-(4-dimethylaminophenyl)diazenylbenzoate + 2 NADH + 2 H(+). Its function is as follows. Quinone reductase that provides resistance to thiol-specific stress caused by electrophilic quinones. Functionally, also exhibits azoreductase activity. Catalyzes the reductive cleavage of the azo bond in aromatic azo compounds to the corresponding amines. The sequence is that of FMN-dependent NADH:quinone oxidoreductase from Staphylococcus aureus (strain bovine RF122 / ET3-1).